A 1412-amino-acid chain; its full sequence is uncharacterized protein (1412 aa).

Residues 1-22 are disordered; that stretch reads MESINVVNSVEDLPGFNPDENV. Coiled-coil stretches lie at residues 317–377 and 732–800; these read NNDF…ILRH and SKEA…SDDE. The segment at 778–808 is disordered; that stretch reads SRKRKHEDIVKEHEAEKRDSDDEDDFEEVDV. Positions 783 to 797 are enriched in basic and acidic residues; it reads HEDIVKEHEAEKRDS. Positions 798–808 are enriched in acidic residues; sequence DDEDDFEEVDV.

This is an uncharacterized protein from Magallana gigas (Pacific oyster).